A 620-amino-acid chain; its full sequence is 1-deoxy-D-xylulose-5-phosphate synthase (620 aa).

Thiamine diphosphate contacts are provided by residues H80 and 121 to 123; that span reads GHS. Position 152 (D152) interacts with Mg(2+). Thiamine diphosphate contacts are provided by residues 153–154, N181, Y288, and E370; that span reads GA. Residue N181 coordinates Mg(2+).

Belongs to the transketolase family. DXPS subfamily. As to quaternary structure, homodimer. It depends on Mg(2+) as a cofactor. Thiamine diphosphate is required as a cofactor.

The enzyme catalyses D-glyceraldehyde 3-phosphate + pyruvate + H(+) = 1-deoxy-D-xylulose 5-phosphate + CO2. The protein operates within metabolic intermediate biosynthesis; 1-deoxy-D-xylulose 5-phosphate biosynthesis; 1-deoxy-D-xylulose 5-phosphate from D-glyceraldehyde 3-phosphate and pyruvate: step 1/1. In terms of biological role, catalyzes the acyloin condensation reaction between C atoms 2 and 3 of pyruvate and glyceraldehyde 3-phosphate to yield 1-deoxy-D-xylulose-5-phosphate (DXP). The polypeptide is 1-deoxy-D-xylulose-5-phosphate synthase (Escherichia coli O157:H7).